Consider the following 305-residue polypeptide: Sulfate adenylyltransferase subunit 2 (305 aa).

It belongs to the PAPS reductase family. CysD subfamily. Heterodimer composed of CysD, the smaller subunit, and CysN.

The enzyme catalyses sulfate + ATP + H(+) = adenosine 5'-phosphosulfate + diphosphate. The protein operates within sulfur metabolism; hydrogen sulfide biosynthesis; sulfite from sulfate: step 1/3. In terms of biological role, with CysN forms the ATP sulfurylase (ATPS) that catalyzes the adenylation of sulfate producing adenosine 5'-phosphosulfate (APS) and diphosphate, the first enzymatic step in sulfur assimilation pathway. APS synthesis involves the formation of a high-energy phosphoric-sulfuric acid anhydride bond driven by GTP hydrolysis by CysN coupled to ATP hydrolysis by CysD. This chain is Sulfate adenylyltransferase subunit 2, found in Pseudomonas fluorescens (strain ATCC BAA-477 / NRRL B-23932 / Pf-5).